A 485-amino-acid polypeptide reads, in one-letter code: Ribosomal protein S6 kinase beta-2 (485 aa).

A disordered region spans residues 1-26 (MAAVFDLDLETEEGSEGEGEPEFSPA). Residues 7-21 (LDLETEEGSEGEGEP) show a composition bias toward acidic residues. Serine 15 carries the phosphoserine modification. The Protein kinase domain occupies 67–328 (FELLSVLGKG…AADVQRHPFF (262 aa)). Residues 73 to 81 (LGKGGYGKV) and lysine 99 each bind ATP. Aspartate 194 (proton acceptor) is an active-site residue. Residues 329 to 399 (RHINWDDLLA…VAPSVLDSIK (71 aa)) enclose the AGC-kinase C-terminal domain. The disordered stretch occupies residues 407 to 485 (KLRSPRRLNS…SKKGRGRSGR (79 aa)). Serine 417 bears the Phosphoserine mark. A Phosphothreonine modification is found at threonine 420. Serine 423 is modified (phosphoserine). The segment covering 436–469 (SPGPPEPMEPSLPPLLPSPPSPPPTSTAPLPIRP) has biased composition (pro residues). Positions 474–480 (KKSKKGR) match the Nuclear localization signal motif. Residues 474 to 485 (KKSKKGRGRSGR) are compositionally biased toward basic residues. Serine 476 is modified (phosphoserine; by PKC).

Belongs to the protein kinase superfamily. AGC Ser/Thr protein kinase family. S6 kinase subfamily. Post-translationally, phosphorylated and activated by MTOR. Phosphorylation by PKC within the NLS in response to mitogenic stimuli causes cytoplasmic retention.

Its subcellular location is the cytoplasm. It localises to the nucleus. The enzyme catalyses L-seryl-[protein] + ATP = O-phospho-L-seryl-[protein] + ADP + H(+). It carries out the reaction L-threonyl-[protein] + ATP = O-phospho-L-threonyl-[protein] + ADP + H(+). Its function is as follows. Phosphorylates specifically ribosomal protein S6. Seems to act downstream of mTOR signaling in response to growth factors and nutrients to promote cell proliferation, cell growth and cell cycle progression in an alternative pathway regulated by MEAK7. This is Ribosomal protein S6 kinase beta-2 (Rps6kb2) from Mus musculus (Mouse).